Reading from the N-terminus, the 212-residue chain is uncharacterized protein (212 aa).

Positions 42 to 101 are disordered; sequence GITGPKATKSPSRRTTRSPSPSRRTTRSSPSRRTTRSSPSRRTTRSPSPSGRRKQGGPAV. The segment covering 58 to 91 has biased composition (low complexity); it reads RSPSPSRRTTRSSPSRRTTRSSPSRRTTRSPSPS.

The protein belongs to the IIV-6 378R family.

This is an uncharacterized protein from Invertebrate iridescent virus 3 (IIV-3).